The chain runs to 415 residues: MARNRMGGALICSFCNKPESSERFVVPGPGGIAICDRCVDLCESYIKSYKTVRPVDRSGAIPTPQELKEYLDEYVIGQEQAKRVLSVAVYNHYKRIMNPPLENDVVIEKSNVLLLGPTGSGKTLLAKTLAQKMQVPFAIADATTLTEAGYVGEDVENILLKLIQNANGDIKEAEMGIIFIDEIDKISRKSENVSITRDVSGEGVQQALLKIIEGTSASVPPQGGRKHPNQDMLKIDTTNILFICGGAFVGLDKIVEARISTKPIGFGAEVKKLSEKNLTELYDQVSPDDLVKFGLIPELIGRIPIKVALNELTKEDLTRILVEPKNAIIKQFQATFKLDNVDLHFDKDAITAIAQQAIDQNTGARGLRSIVEKLMLDAMFEAPSIKGRKELIINKKMIGNSSSKPKIKLLDEKTA.

In terms of domain architecture, ClpX-type ZB spans 1–54; sequence MARNRMGGALICSFCNKPESSERFVVPGPGGIAICDRCVDLCESYIKSYKTVRP. Zn(2+) is bound by residues cysteine 12, cysteine 15, cysteine 35, and cysteine 38. 117–124 is an ATP binding site; that stretch reads PTGSGKTL.

The protein belongs to the ClpX chaperone family. Component of the ClpX-ClpP complex. Forms a hexameric ring that, in the presence of ATP, binds to fourteen ClpP subunits assembled into a disk-like structure with a central cavity, resembling the structure of eukaryotic proteasomes.

ATP-dependent specificity component of the Clp protease. It directs the protease to specific substrates. Can perform chaperone functions in the absence of ClpP. This Treponema denticola (strain ATCC 35405 / DSM 14222 / CIP 103919 / JCM 8153 / KCTC 15104) protein is ATP-dependent Clp protease ATP-binding subunit ClpX.